A 473-amino-acid polypeptide reads, in one-letter code: MSLLVVGLNHQTAPTSLLERTSVSAEDIPKVLHDLAEGTHVSEAVVLSTCNRIEIYAEVETFHGGVADISDQLSRICGIDLGDLAGHLYVHHEARAIGHLFSVVCGLDSMLVGESQILGQVRTAFRAGQAAGVAGSALSGLFQAALRVGKRAHSETSIDAAGASIVSVGVRLAASGLGLHSEVPAVPVAPPGGRALDGGGVAAEGPRHAVTPEPPPLAGTRVLLIGAGAVGSLAAQTVRRAGAGEVVIANRTAARAARVAEAHEARVVGLTDLAHEITMADLVISSTGASGLVVEHELVAAALPGRAGRPLVFLDLALPHDIDPGVRELPGVSLIDLDALRIALDGAQVTHDVEAVRALVAAEVASFLDRRRAGRVAPTVVALRAHAAAVVRSELARLHTRLPDLDDREWSLVEGSVRRVVDKLLHAPTVRVQELAGAPGGDAYAEALRELFDLPREVPAVVSAPDLDLLERS.

Substrate-binding positions include 49 to 52, S109, 114 to 116, and Q120; these read TCNR and ESQ. C50 acts as the Nucleophile in catalysis. Residues 196-215 form a disordered region; sequence LDGGGVAAEGPRHAVTPEPP. 226-231 lines the NADP(+) pocket; sequence GAGAVG.

It belongs to the glutamyl-tRNA reductase family. In terms of assembly, homodimer.

It carries out the reaction (S)-4-amino-5-oxopentanoate + tRNA(Glu) + NADP(+) = L-glutamyl-tRNA(Glu) + NADPH + H(+). Its pathway is porphyrin-containing compound metabolism; protoporphyrin-IX biosynthesis; 5-aminolevulinate from L-glutamyl-tRNA(Glu): step 1/2. Its function is as follows. Catalyzes the NADPH-dependent reduction of glutamyl-tRNA(Glu) to glutamate 1-semialdehyde (GSA). The chain is Glutamyl-tRNA reductase from Frankia casuarinae (strain DSM 45818 / CECT 9043 / HFP020203 / CcI3).